Here is a 397-residue protein sequence, read N- to C-terminus: Probable sugar efflux transporter (397 aa).

Transmembrane regions (helical) follow at residues 15–35 (VVTL…PVGL), 50–70 (VGIM…PFML), 81–101 (LICL…AWNF), 103–123 (VLVI…SITA), 136–156 (AQAL…GLPI), 169–189 (TFFA…KLLP), 209–229 (PALM…YTAY), 246–266 (FATV…VVFG), 275–295 (PLIS…LPAA), 301–321 (LAVL…GMQV), 333–353 (VAMA…ALVG), and 364–384 (TIGY…IIIF).

Belongs to the major facilitator superfamily. SotB (TC 2.A.1.2) family.

Its subcellular location is the cell inner membrane. Involved in the efflux of sugars. The physiological role may be the reduction of the intracellular concentration of toxic sugars or sugar metabolites. The protein is Probable sugar efflux transporter of Citrobacter koseri (strain ATCC BAA-895 / CDC 4225-83 / SGSC4696).